A 441-amino-acid polypeptide reads, in one-letter code: Probable tRNA pseudouridine synthase D (441 aa).

The Nucleophile role is filled by D89. In terms of domain architecture, TRUD spans 168–393; that stretch reads GVPNFFGVQR…SKGTRREVLL (226 aa).

This sequence belongs to the pseudouridine synthase TruD family.

It catalyses the reaction uridine(13) in tRNA = pseudouridine(13) in tRNA. Could be responsible for synthesis of pseudouridine from uracil-13 in transfer RNAs. The sequence is that of Probable tRNA pseudouridine synthase D from Methanosarcina acetivorans (strain ATCC 35395 / DSM 2834 / JCM 12185 / C2A).